The following is a 921-amino-acid chain: MAGHTEENAQLLSTEQESVSRHSSDSAASTASTTSLVFDRIGERVAANRSEKSMMVTPKFPPRGEMAYADDEHTQIHLDEEEEKDYDLEDSAFLTNGATNKSVDKKLRKLIWIVGGVFIGAWVLALFIFLGKQAYKHSSEIPHDPQATSSRGNGKKVTMDQVMGGQWRATKHSISWIAGANGEDGLLLEQGSAGKDYLIVEDVRTQNPETVGTLDRMTLMKDGSFTVAGRSLYPSKVYPSKDLKKVLVATDVQSNWRHSFYAKYWIFDVESQTAEPLDPVDLDGRVQLASWSPKSDAIVFTRDNNMYLRKLSSPTVIQITTDGGPEFFYGVPDWVYEEEVFAGASATWWDDSGKYIAFLRTNESEVPEYPIQYFVSRPSGKEPLPGEENYPEVREIKYPKAGAPNPTVDLLFYDIFKAEVFEVTIAGGFEPKNLLITEVVWAGSTGKALIRETNRESDILRVVLVDVVAREGKTVRYTDINKLDGGWFEVSEDTRYIPADPANGRPHDGYIDTIIHENYDHLGYFTPMDNPEPILLTSGNWEVVQAPSAVDLKNNLVYFVSTKESPITRQVYSVKLDGTDMKAITDTSNEGYYGASFSKGAGYVLLNYNGPGIPWQKVISTPSNGNQYTHTIEENKGLAEMAKKHDLPILIYQTVTIDGFELQVVERRPPHFNPKKKYPVLFYLYGGPGSQTVSKSFNVDFESYIASNLGYIVVTVDGRGTGFIGRKARTIIRGNIGHYEARDQIETAKIWASKKYVDASRMAIWGWSYGGFMTLKTLEEDAGETFSYGMAVAPVTDWRFYDSIYTERYMHTPQHNPGGYDNTSISNVEALSKNVRFLVMHGVADDNVHMQNTLTLLDKLDLAGVENYDVHVFPDSDHSIYFHNANRIVYDKLNNWLINAFNGEWLRTANAVPLQIDAAKV.

The interval 1–33 (MAGHTEENAQLLSTEQESVSRHSSDSAASTAST) is disordered. The Cytoplasmic portion of the chain corresponds to 1-109 (MAGHTEENAQ…NKSVDKKLRK (109 aa)). Residues 8 to 17 (NAQLLSTEQE) show a composition bias toward polar residues. The helical; Signal-anchor for type II membrane protein transmembrane segment at 110-130 (LIWIVGGVFIGAWVLALFIFL) threads the bilayer. Topologically, residues 131 to 921 (GKQAYKHSSE…VPLQIDAAKV (791 aa)) are vacuolar. Asn362 is a glycosylation site (N-linked (GlcNAc...) asparagine). The active-site Charge relay system is the Ser768. The N-linked (GlcNAc...) asparagine glycan is linked to Asn822. Active-site charge relay system residues include Asp845 and His878.

The protein belongs to the peptidase S9B family.

It is found in the vacuole membrane. It carries out the reaction Release of an N-terminal dipeptide, Xaa-Yaa-|-Zaa-, from a polypeptide, preferentially when Yaa is Pro, provided Zaa is neither Pro nor hydroxyproline.. In terms of biological role, type IV dipeptidyl-peptidase which removes N-terminal dipeptides sequentially from polypeptides having unsubstituted N-termini provided that the penultimate residue is proline. This chain is Probable dipeptidyl-aminopeptidase B (dapB), found in Sclerotinia sclerotiorum (strain ATCC 18683 / 1980 / Ss-1) (White mold).